Reading from the N-terminus, the 144-residue chain is Large ribosomal subunit protein uL16 (144 aa).

It belongs to the universal ribosomal protein uL16 family. As to quaternary structure, part of the 50S ribosomal subunit.

In terms of biological role, binds 23S rRNA and is also seen to make contacts with the A and possibly P site tRNAs. The protein is Large ribosomal subunit protein uL16 of Oceanobacillus iheyensis (strain DSM 14371 / CIP 107618 / JCM 11309 / KCTC 3954 / HTE831).